The primary structure comprises 405 residues: Eukaryotic translation initiation factor 5 (405 aa).

27-34 (GRGNGIKT) contacts GTP. Residues 143 to 202 (NPPDSVSGSKKKKKAATASANVRGGGLSISDIAQGKSQNAPSDGTGSSTPQHHDEDEDEL) form a disordered region. Ser170 and Ser172 each carry phosphoserine. The segment covering 177 to 192 (GKSQNAPSDGTGSSTP) has biased composition (polar residues). Thr191 is modified (phosphothreonine). Ser228 carries the post-translational modification Phosphoserine. Residues 241-402 (VNSELTQLDE…ETAESDDDEE (162 aa)) form the W2 domain. Thr317 carries the post-translational modification Phosphothreonine. Position 397 is a phosphoserine (Ser397).

Belongs to the eIF-2-beta/eIF-5 family. Monomer. The factors eIF-1, eIF-2, eIF-3, TIF5/eIF-5 and methionyl-tRNAi form a multifactor complex (MFC) that may bind to the 40S ribosome. TIF32, NIP1 and TIF5/eIF-5 comprise a minimal 40S-ribosome-binding unit. Interacts with NIP1. Interacts with SUI3.

Its function is as follows. Catalyzes the hydrolysis of GTP bound to the 40S ribosomal initiation complex (40S.mRNA.Met-tRNA[F].eIF-2.GTP) with the subsequent joining of a 60S ribosomal subunit resulting in the release of eIF-2 and the guanine nucleotide. The subsequent joining of a 60S ribosomal subunit results in the formation of a functional 80S initiation complex (80S.mRNA.Met-tRNA[F]). eIF-5 is essential for cell viability. This chain is Eukaryotic translation initiation factor 5 (TIF5), found in Saccharomyces cerevisiae (strain ATCC 204508 / S288c) (Baker's yeast).